The primary structure comprises 599 residues: Elongation factor 4 (599 aa).

Residues 4–185 (KNIRNFSIIA…VIIKKVPSPK (182 aa)) enclose the tr-type G domain. Residues 16 to 21 (DHGKST) and 132 to 135 (NKVD) contribute to the GTP site.

This sequence belongs to the TRAFAC class translation factor GTPase superfamily. Classic translation factor GTPase family. LepA subfamily.

The protein resides in the cell membrane. The enzyme catalyses GTP + H2O = GDP + phosphate + H(+). Its function is as follows. Required for accurate and efficient protein synthesis under certain stress conditions. May act as a fidelity factor of the translation reaction, by catalyzing a one-codon backward translocation of tRNAs on improperly translocated ribosomes. Back-translocation proceeds from a post-translocation (POST) complex to a pre-translocation (PRE) complex, thus giving elongation factor G a second chance to translocate the tRNAs correctly. Binds to ribosomes in a GTP-dependent manner. The sequence is that of Elongation factor 4 from Mycoplasmoides gallisepticum (strain R(low / passage 15 / clone 2)) (Mycoplasma gallisepticum).